A 1282-amino-acid chain; its full sequence is Indigoidine synthase (1282 aa).

An adenylation region spans residues 24-379 (AQRVAEHPEA…GGIQLARGYL (356 aa)). A Carrier domain is found at 937–1012 (APRTETEKEI…KLARRLEREV (76 aa)). S972 is subject to O-(pantetheine 4'-phosphoryl)serine. The thioesterase stretch occupies residues 1030 to 1138 (RPVICWPGLG…APGSPKVRAE (109 aa)).

It belongs to the ATP-dependent AMP-binding enzyme family. It depends on pantetheine 4'-phosphate as a cofactor.

It catalyses the reaction 2 FMN + 2 L-glutamine + 2 ATP + O2 = indigoidine + 2 FMNH2 + 2 AMP + 2 diphosphate + 2 H2O. The catalysed reaction is FMN + L-glutamine + ATP = 3-amino-1,5-dihydropyridine-2,6-dione + FMNH2 + AMP + diphosphate. The enzyme catalyses 2 3-amino-1,5-dihydropyridine-2,6-dione + O2 = indigoidine + 2 H2O. Its pathway is pigment biosynthesis. Functionally, nonribosomal peptide synthetase involved in the biosynthesis of the blue pigment indigoidine. Catalyzes the synthesis of the blue pigment using L-Gln as a substrate. Two glutamine molecules are cyclized and oxidized to form indigoidine. The chain is Indigoidine synthase from Streptomyces lavendulae.